A 58-amino-acid chain; its full sequence is Basic phospholipase A2 homolog PocTX (58 aa).

A disulfide bond links C29 and C45.

As to expression, expressed by the venom gland.

The protein resides in the secreted. Wasp venom phospholipase A2 homolog that lacks enzymatic activity. The chain is Basic phospholipase A2 homolog PocTX from Polybia occidentalis (Paper wasp).